We begin with the raw amino-acid sequence, 314 residues long: Porphobilinogen deaminase (314 aa).

Cys242 carries the S-(dipyrrolylmethanemethyl)cysteine modification.

It belongs to the HMBS family. Monomer. Requires dipyrromethane as cofactor.

It carries out the reaction 4 porphobilinogen + H2O = hydroxymethylbilane + 4 NH4(+). Its pathway is porphyrin-containing compound metabolism; protoporphyrin-IX biosynthesis; coproporphyrinogen-III from 5-aminolevulinate: step 2/4. In terms of biological role, tetrapolymerization of the monopyrrole PBG into the hydroxymethylbilane pre-uroporphyrinogen in several discrete steps. This chain is Porphobilinogen deaminase (hemC), found in Buchnera aphidicola subsp. Acyrthosiphon pisum (strain APS) (Acyrthosiphon pisum symbiotic bacterium).